Reading from the N-terminus, the 250-residue chain is Phosphonates import ATP-binding protein PhnC (250 aa).

An ABC transporter domain is found at 2–247; the sequence is ILFNNVNKVW…KLDAQAMKKI (246 aa). 35–42 contributes to the ATP binding site; the sequence is GLSGAGKT.

This sequence belongs to the ABC transporter superfamily. Phosphonates importer (TC 3.A.1.9.1) family. The complex is composed of two ATP-binding proteins (PhnC), two transmembrane proteins (PhnE) and a solute-binding protein (PhnD).

It localises to the cell membrane. It catalyses the reaction phosphonate(out) + ATP + H2O = phosphonate(in) + ADP + phosphate + H(+). Functionally, part of the ABC transporter complex PhnCDE involved in phosphonates import. Responsible for energy coupling to the transport system. The sequence is that of Phosphonates import ATP-binding protein PhnC from Mycoplasma capricolum subsp. capricolum (strain California kid / ATCC 27343 / NCTC 10154).